Consider the following 446-residue polypeptide: Glutamyl-tRNA(Gln) amidotransferase subunit D (446 aa).

One can recognise an Asparaginase/glutaminase domain in the interval 90–421; sequence SEVMIISTGG…DRIKEIMLTN (332 aa). Catalysis depends on residues T100, T176, D177, and K255.

Belongs to the asparaginase 1 family. GatD subfamily. In terms of assembly, heterodimer of GatD and GatE.

The catalysed reaction is L-glutamyl-tRNA(Gln) + L-glutamine + ATP + H2O = L-glutaminyl-tRNA(Gln) + L-glutamate + ADP + phosphate + H(+). Functionally, allows the formation of correctly charged Gln-tRNA(Gln) through the transamidation of misacylated Glu-tRNA(Gln) in organisms which lack glutaminyl-tRNA synthetase. The reaction takes place in the presence of glutamine and ATP through an activated gamma-phospho-Glu-tRNA(Gln). The GatDE system is specific for glutamate and does not act on aspartate. This chain is Glutamyl-tRNA(Gln) amidotransferase subunit D, found in Sulfolobus acidocaldarius (strain ATCC 33909 / DSM 639 / JCM 8929 / NBRC 15157 / NCIMB 11770).